Here is a 539-residue protein sequence, read N- to C-terminus: Phosphoenolpyruvate carboxykinase (ATP) (539 aa).

Arg64, Tyr206, and Lys212 together coordinate substrate. ATP is bound by residues Lys212, His231, and 247–255 (GLSGTGKTT). Mn(2+) contacts are provided by Lys212 and His231. Asp268 lines the Mn(2+) pocket. Residues Glu296, Arg332, 448-449 (RI), and Thr454 contribute to the ATP site. A substrate-binding site is contributed by Arg332.

This sequence belongs to the phosphoenolpyruvate carboxykinase (ATP) family. In terms of assembly, monomer. Mn(2+) is required as a cofactor.

The protein resides in the cytoplasm. It catalyses the reaction oxaloacetate + ATP = phosphoenolpyruvate + ADP + CO2. The protein operates within carbohydrate biosynthesis; gluconeogenesis. Its function is as follows. Involved in the gluconeogenesis. Catalyzes the conversion of oxaloacetate (OAA) to phosphoenolpyruvate (PEP) through direct phosphoryl transfer between the nucleoside triphosphate and OAA. The protein is Phosphoenolpyruvate carboxykinase (ATP) of Yersinia pestis bv. Antiqua (strain Antiqua).